Here is a 156-residue protein sequence, read N- to C-terminus: Small ribosomal subunit protein uS7 (156 aa).

It belongs to the universal ribosomal protein uS7 family. Part of the 30S ribosomal subunit. Contacts proteins S9 and S11.

Its function is as follows. One of the primary rRNA binding proteins, it binds directly to 16S rRNA where it nucleates assembly of the head domain of the 30S subunit. Is located at the subunit interface close to the decoding center, probably blocks exit of the E-site tRNA. In Geobacter metallireducens (strain ATCC 53774 / DSM 7210 / GS-15), this protein is Small ribosomal subunit protein uS7.